The following is a 274-amino-acid chain: MALVKSKPTSPGRRFVVKTKDARLHQGGPYEPLVVQKSKTGGRNSNGRITTRHRGGGHKQRYRQIDFKRNKTGVPGKVERLEYDPNRSANIALVLYQDGERRYIIAPRGVEPGSPIQSGRDAAIKPGNALPLRNIPVGTQVHCVELKPGKGAQLARSAGAGVQVVARESGMATLRLRSGEMRRVPADCMATVGEVGNAEHSLRNLGKAGAKRHLGVRPTVRGVAMNPVDHPHGGGEGRTAGGRHPVSPWGMPTKGHKTRKNKRTDKYIVRRRKR.

2 disordered regions span residues 36 to 61 (QKSK…HKQR) and 223 to 274 (VAMN…RRKR). A compositionally biased stretch (polar residues) spans 37–46 (KSKTGGRNSN). 2 stretches are compositionally biased toward basic residues: residues 50 to 61 (TTRHRGGGHKQR) and 254 to 274 (KGHK…RRKR).

The protein belongs to the universal ribosomal protein uL2 family. As to quaternary structure, part of the 50S ribosomal subunit. Forms a bridge to the 30S subunit in the 70S ribosome.

In terms of biological role, one of the primary rRNA binding proteins. Required for association of the 30S and 50S subunits to form the 70S ribosome, for tRNA binding and peptide bond formation. It has been suggested to have peptidyltransferase activity; this is somewhat controversial. Makes several contacts with the 16S rRNA in the 70S ribosome. The polypeptide is Large ribosomal subunit protein uL2 (Halorhodospira halophila (strain DSM 244 / SL1) (Ectothiorhodospira halophila (strain DSM 244 / SL1))).